Here is a 251-residue protein sequence, read N- to C-terminus: 4-hydroxy-tetrahydrodipicolinate reductase (251 aa).

NAD(+) is bound by residues 8 to 13 (GAKGRM), 76 to 78 (GTT), and 106 to 109 (APNF). The Proton donor/acceptor role is filled by histidine 136. Histidine 137 provides a ligand contact to (S)-2,3,4,5-tetrahydrodipicolinate. The active-site Proton donor is lysine 140. 146 to 147 (GT) provides a ligand contact to (S)-2,3,4,5-tetrahydrodipicolinate.

The protein belongs to the DapB family.

The protein localises to the cytoplasm. It carries out the reaction (S)-2,3,4,5-tetrahydrodipicolinate + NAD(+) + H2O = (2S,4S)-4-hydroxy-2,3,4,5-tetrahydrodipicolinate + NADH + H(+). The catalysed reaction is (S)-2,3,4,5-tetrahydrodipicolinate + NADP(+) + H2O = (2S,4S)-4-hydroxy-2,3,4,5-tetrahydrodipicolinate + NADPH + H(+). It functions in the pathway amino-acid biosynthesis; L-lysine biosynthesis via DAP pathway; (S)-tetrahydrodipicolinate from L-aspartate: step 4/4. In terms of biological role, catalyzes the conversion of 4-hydroxy-tetrahydrodipicolinate (HTPA) to tetrahydrodipicolinate. This Bifidobacterium longum subsp. infantis (strain ATCC 15697 / DSM 20088 / JCM 1222 / NCTC 11817 / S12) protein is 4-hydroxy-tetrahydrodipicolinate reductase.